The sequence spans 346 residues: Methylthioribose-1-phosphate isomerase (346 aa).

Substrate is bound by residues 46–48 (RGA), R89, and Q196. D237 acts as the Proton donor in catalysis. Residue 247–248 (NK) coordinates substrate.

It belongs to the eIF-2B alpha/beta/delta subunits family. MtnA subfamily.

The catalysed reaction is 5-(methylsulfanyl)-alpha-D-ribose 1-phosphate = 5-(methylsulfanyl)-D-ribulose 1-phosphate. It participates in amino-acid biosynthesis; L-methionine biosynthesis via salvage pathway; L-methionine from S-methyl-5-thio-alpha-D-ribose 1-phosphate: step 1/6. Catalyzes the interconversion of methylthioribose-1-phosphate (MTR-1-P) into methylthioribulose-1-phosphate (MTRu-1-P). In Geotalea daltonii (strain DSM 22248 / JCM 15807 / FRC-32) (Geobacter daltonii), this protein is Methylthioribose-1-phosphate isomerase.